The sequence spans 204 residues: Holliday junction branch migration complex subunit RuvA (204 aa).

Residues 1–64 (MIGRLRGILL…EDAQLLYGFN (64 aa)) form a domain I region. The domain II stretch occupies residues 65–143 (TVKERALFRE…GWSAGDLFTP (79 aa)). A flexible linker region spans residues 144-155 (FTDAAPVDSGST). The segment at 156–204 (SSNSAEEEAVSALLALGYKPVQASKVVSQIAKPDMTSEQLIREALKSMV) is domain III.

This sequence belongs to the RuvA family. As to quaternary structure, homotetramer. Forms an RuvA(8)-RuvB(12)-Holliday junction (HJ) complex. HJ DNA is sandwiched between 2 RuvA tetramers; dsDNA enters through RuvA and exits via RuvB. An RuvB hexamer assembles on each DNA strand where it exits the tetramer. Each RuvB hexamer is contacted by two RuvA subunits (via domain III) on 2 adjacent RuvB subunits; this complex drives branch migration. In the full resolvosome a probable DNA-RuvA(4)-RuvB(12)-RuvC(2) complex forms which resolves the HJ.

It localises to the cytoplasm. The RuvA-RuvB-RuvC complex processes Holliday junction (HJ) DNA during genetic recombination and DNA repair, while the RuvA-RuvB complex plays an important role in the rescue of blocked DNA replication forks via replication fork reversal (RFR). RuvA specifically binds to HJ cruciform DNA, conferring on it an open structure. The RuvB hexamer acts as an ATP-dependent pump, pulling dsDNA into and through the RuvAB complex. HJ branch migration allows RuvC to scan DNA until it finds its consensus sequence, where it cleaves and resolves the cruciform DNA. The sequence is that of Holliday junction branch migration complex subunit RuvA from Vibrio vulnificus (strain CMCP6).